The following is a 211-amino-acid chain: UPF0056 membrane protein YvbG (211 aa).

6 helical membrane-spanning segments follow: residues Met1–Gly21, Ile47–Phe67, Ile69–Leu89, Ile114–Met134, Met150–Ile170, and Leu188–Val208.

The protein belongs to the UPF0056 (MarC) family.

It localises to the cell membrane. This is UPF0056 membrane protein YvbG (yvbG) from Bacillus subtilis (strain 168).